The chain runs to 264 residues: Thymidylate synthase (264 aa).

Arg-21 lines the dUMP pocket. A (6R)-5,10-methylene-5,6,7,8-tetrahydrofolate-binding site is contributed by His-51. Residue 126–127 (RR) participates in dUMP binding. Cys-146 (nucleophile) is an active-site residue. Residues 166 to 169 (RSAD), Asn-177, and 207 to 209 (HIY) contribute to the dUMP site. Residue Asp-169 coordinates (6R)-5,10-methylene-5,6,7,8-tetrahydrofolate. Ala-263 provides a ligand contact to (6R)-5,10-methylene-5,6,7,8-tetrahydrofolate.

The protein belongs to the thymidylate synthase family. Bacterial-type ThyA subfamily. In terms of assembly, homodimer.

It is found in the cytoplasm. It carries out the reaction dUMP + (6R)-5,10-methylene-5,6,7,8-tetrahydrofolate = 7,8-dihydrofolate + dTMP. Its pathway is pyrimidine metabolism; dTTP biosynthesis. Catalyzes the reductive methylation of 2'-deoxyuridine-5'-monophosphate (dUMP) to 2'-deoxythymidine-5'-monophosphate (dTMP) while utilizing 5,10-methylenetetrahydrofolate (mTHF) as the methyl donor and reductant in the reaction, yielding dihydrofolate (DHF) as a by-product. This enzymatic reaction provides an intracellular de novo source of dTMP, an essential precursor for DNA biosynthesis. This chain is Thymidylate synthase, found in Brucella abortus (strain 2308).